A 461-amino-acid chain; its full sequence is Vitamin K-dependent protein C (461 aa).

Residues 1-18 (MWQLTSLLLFVATWGISG) form the signal peptide. O-linked (GalNAc...) threonine glycosylation is present at Thr19. Residues 19–42 (TPAPLDSVFSSSERAHQVLRIRKR) constitute a propeptide that is removed on maturation. The region spanning 43-88 (ANSFLEELRHSSLERECIEEICDFEEAKEIFQNVDDTLAFWSKHVD) is the Gla domain. Glu48, Glu49, Glu56, Glu58, Glu61, Glu62, Glu67, Glu68, and Glu71 each carry 4-carboxyglutamate. A disulfide bridge connects residues Cys59 and Cys64. 4 disulfide bridges follow: Cys92–Cys111, Cys101–Cys106, Cys105–Cys120, and Cys122–Cys131. 2 EGF-like domains span residues 97-132 (LEHP…RFCQ) and 136-176 (SFLN…LQCH). At Asp113 the chain carries (3R)-3-hydroxyaspartate. An N-linked (GlcNAc...) asparagine glycan is attached at Asn139. Disulfide bonds link Cys140–Cys151, Cys147–Cys160, Cys162–Cys175, Cys183–Cys319, and Cys238–Cys254. In terms of domain architecture, Peptidase S1 spans 212 to 450 (LIDGKMTRRG…YLDWIHGHIR (239 aa)). The active-site Charge relay system is the His253. The N-linked (GlcNAc...) asparagine glycan is linked to Asn290. The Charge relay system role is filled by Asp299. A Phosphoserine; by FAM20C modification is found at Ser347. N-linked (GlcNAc...) asparagine glycosylation occurs at Asn355. N-linked (GlcNAc...) asparagine; atypical; partial glycosylation is present at Asn371. 2 disulfides stabilise this stretch: Cys373-Cys387 and Cys398-Cys426. Ser402 acts as the Charge relay system in catalysis.

The protein belongs to the peptidase S1 family. Synthesized as a single chain precursor, which is cleaved into a light chain and a heavy chain held together by a disulfide bond. The enzyme is then activated by thrombin, which cleaves a tetradecapeptide from the amino end of the heavy chain; this reaction, which occurs at the surface of endothelial cells, is strongly promoted by thrombomodulin. Interacts (activated) with iripin-8, a serine protease inhibitor from Ixodes ricinus saliva. Post-translationally, the vitamin K-dependent, enzymatic carboxylation of some Glu residues allows the modified protein to bind calcium. N- and O-glycosylated. Partial (70%) N-glycosylation of Asn-371 with an atypical N-X-C site produces a higher molecular weight form referred to as alpha. The lower molecular weight form, not N-glycosylated at Asn-371, is beta. O-glycosylated with core 1 or possibly core 8 glycans. In terms of processing, the iron and 2-oxoglutarate dependent 3-hydroxylation of aspartate and asparagine is (R) stereospecific within EGF domains. Post-translationally, may be phosphorylated on a Ser or Thr in a region (AA 25-30) of the propeptide. Plasma; synthesized in the liver.

It localises to the secreted. The protein resides in the golgi apparatus. It is found in the endoplasmic reticulum. The catalysed reaction is Degradation of blood coagulation factors Va and VIIIa.. Protein C is a vitamin K-dependent serine protease that regulates blood coagulation by inactivating factors Va and VIIIa in the presence of calcium ions and phospholipids. Exerts a protective effect on the endothelial cell barrier function. This chain is Vitamin K-dependent protein C (PROC), found in Homo sapiens (Human).